The sequence spans 88 residues: Small ribosomal subunit protein uS15c (88 aa).

This sequence belongs to the universal ribosomal protein uS15 family. In terms of assembly, part of the 30S ribosomal subunit.

Its subcellular location is the plastid. The protein resides in the chloroplast. This chain is Small ribosomal subunit protein uS15c (rps15), found in Pinus thunbergii (Japanese black pine).